We begin with the raw amino-acid sequence, 222 residues long: Ubiquitin-conjugating enzyme E2 S (222 aa).

Met-1 bears the N-acetylmethionine mark. Positions 11 to 157 (HIIRLVYKEV…ARLLTEIHGG (147 aa)) constitute a UBC core domain. Cys-95 functions as the Glycyl thioester intermediate in the catalytic mechanism. Residues 156-222 (GGAGGPSGRA…TDKKRALRRL (67 aa)) form a disordered region. Ser-173 carries the post-translational modification Phosphoserine. Residues 208 to 222 (AAKKKTDKKRALRRL) are compositionally biased toward basic residues.

Belongs to the ubiquitin-conjugating enzyme family. Component of the APC/C complex, composed of at least 14 distinct subunits that assemble into a complex of at least 19 chains with a combined molecular mass of around 1.2 MDa. Within this complex, directly interacts with ANAPC2 and ANAPC4. Interacts with CDC20, FZR1/CDH1 and VHL. In terms of processing, autoubiquitinated by the APC/C complex during G1, leading to its degradation by the proteasome.

It catalyses the reaction S-ubiquitinyl-[E1 ubiquitin-activating enzyme]-L-cysteine + [E2 ubiquitin-conjugating enzyme]-L-cysteine = [E1 ubiquitin-activating enzyme]-L-cysteine + S-ubiquitinyl-[E2 ubiquitin-conjugating enzyme]-L-cysteine.. It participates in protein modification; protein ubiquitination. Its function is as follows. Accepts ubiquitin from the E1 complex and catalyzes its covalent attachment to other proteins. Catalyzes 'Lys-11'-linked polyubiquitination. Acts as an essential factor of the anaphase promoting complex/cyclosome (APC/C), a cell cycle-regulated ubiquitin ligase that controls progression through mitosis. Acts by specifically elongating 'Lys-11'-linked polyubiquitin chains initiated by the E2 enzyme UBE2C/UBCH10 on APC/C substrates, enhancing the degradation of APC/C substrates by the proteasome and promoting mitotic exit. Also acts by elongating ubiquitin chains initiated by the E2 enzyme UBE2D1/UBCH5 in vitro; it is however unclear whether UBE2D1/UBCH5 acts as an E2 enzyme for the APC/C in vivo. Also involved in ubiquitination and subsequent degradation of VHL, resulting in an accumulation of HIF1A. In vitro able to promote polyubiquitination using all 7 ubiquitin Lys residues, except 'Lys-48'-linked polyubiquitination. In Homo sapiens (Human), this protein is Ubiquitin-conjugating enzyme E2 S (UBE2S).